A 211-amino-acid chain; its full sequence is MQNNNTAISQLIEAGKWVSQKEWIPATGGNFSARTESGFVITASGQDKGKLTSEQFLQLDLQGKPLAGTKKRSAETQLHLSLYQLIPEAQCVLHTHSVAATVLSQITKSHKLDLTGYEMQKALTGFTSHLETLSIPIFNNDQDIDHLSLLVSDHHLHTPIEHGVLIRGHGLYAVGRNIDEVRRHLEVLEFLFSCELERLKITGIQASNNNK.

The Zn(2+) site is built by histidine 94 and histidine 96.

This sequence belongs to the aldolase class II family. MtnB subfamily. It depends on Zn(2+) as a cofactor.

It carries out the reaction 5-(methylsulfanyl)-D-ribulose 1-phosphate = 5-methylsulfanyl-2,3-dioxopentyl phosphate + H2O. It participates in amino-acid biosynthesis; L-methionine biosynthesis via salvage pathway; L-methionine from S-methyl-5-thio-alpha-D-ribose 1-phosphate: step 2/6. Its function is as follows. Catalyzes the dehydration of methylthioribulose-1-phosphate (MTRu-1-P) into 2,3-diketo-5-methylthiopentyl-1-phosphate (DK-MTP-1-P). The protein is Methylthioribulose-1-phosphate dehydratase of Pseudoalteromonas translucida (strain TAC 125).